We begin with the raw amino-acid sequence, 310 residues long: Forkhead box protein pes-1 (310 aa).

The span at 1–16 (MLPLSISTSPDPASQF) shows a compositional bias: polar residues. Disordered regions lie at residues 1-37 (MLPLSISTSPDPASQFPTVPDLPTLTPTPSPTSGTAK), 58-77 (VSPSSTGLLEPKSSTVSPAP), 92-126 (KQSSSGVSSTRTSSLEPKSSAVSPAPSSPEASNPN), and 217-242 (SLRRKKNGKPRKYSKRSNTVSNPNPI). Low complexity predominate over residues 17-35 (PTVPDLPTLTPTPSPTSGT). The segment at residues 128 to 220 (RPAYSYNALI…IGKDCGSLRR (93 aa)) is a DNA-binding region (fork-head). The segment covering 218–231 (LRRKKNGKPRKYSK) has biased composition (basic residues).

It is found in the nucleus. The protein localises to the cytoplasm. Functionally, transcription factor. Plays a role in embryogenesis and later development, perhaps acting redundantly with forkhead protein fkh-2. The sequence is that of Forkhead box protein pes-1 from Caenorhabditis briggsae.